Here is a 417-residue protein sequence, read N- to C-terminus: MAEIKVPELAESISEGTIAQWLKQPGDYVEQGEYLLELETDKVNVELTAEESGVLQEVLKDSGDTVQVGEIIGTISEGAGESSAPAPTEKTESKESVKEEKQAEPAAQEVSEEAQSEAKSRTIASPSARKLAREKGIDLSQVPTGDPLGRVRKQDVEAYEKPASKPAPQQKQQPQAQKAQQSFDKPVEVQKMSRRRQTIAKRLVEVQQTSAMLTTFNEVDMTAVMNLRKRRKDQFFEQNEVKLGFMSFFTKAVVAALKKYPLLNAEIQGDELIVKKFYDIGIAVAADEGLVVPVVRDADRLTFAGIEKEIGELAKKARNNKLTLSELQGGSFTITNGGTFGSLMSTPILNSPQVGILGMHKIQLRPVAIDEERFENRPMMYIALSYDHRIVDGKEAVGFLVTIKNLLEDPEQLLLEG.

Positions 1–76 constitute a Lipoyl-binding domain; the sequence is MAEIKVPELA…QVGEIIGTIS (76 aa). K42 is subject to N6-lipoyllysine. The tract at residues 75–191 is disordered; the sequence is ISEGAGESSA…SFDKPVEVQK (117 aa). Basic and acidic residues-rich tracts occupy residues 89–103 and 152–163; these read EKTE…EKQA and RKQDVEAYEKPA. In terms of domain architecture, Peripheral subunit-binding (PSBD) spans 123–160; sequence IASPSARKLAREKGIDLSQVPTGDPLGRVRKQDVEAYE. Over residues 164-182 the composition is skewed to low complexity; the sequence is SKPAPQQKQQPQAQKAQQS. Active-site residues include H388 and D392.

Belongs to the 2-oxoacid dehydrogenase family. As to quaternary structure, forms a 24-polypeptide structural core with octahedral symmetry. Part of the 2-oxoglutarate dehydrogenase (OGDH) complex composed of E1 (2-oxoglutarate dehydrogenase), E2 (dihydrolipoamide succinyltransferase) and E3 (dihydrolipoamide dehydrogenase); the complex contains multiple copies of the three enzymatic components (E1, E2 and E3). Requires (R)-lipoate as cofactor.

The enzyme catalyses N(6)-[(R)-dihydrolipoyl]-L-lysyl-[protein] + succinyl-CoA = N(6)-[(R)-S(8)-succinyldihydrolipoyl]-L-lysyl-[protein] + CoA. The protein operates within amino-acid degradation; L-lysine degradation via saccharopine pathway; glutaryl-CoA from L-lysine: step 6/6. Functionally, E2 component of the 2-oxoglutarate dehydrogenase (OGDH) complex which catalyzes the second step in the conversion of 2-oxoglutarate to succinyl-CoA and CO(2). This Bacillus subtilis (strain 168) protein is Dihydrolipoyllysine-residue succinyltransferase component of 2-oxoglutarate dehydrogenase complex (odhB).